Reading from the N-terminus, the 447-residue chain is Phosphoglucosamine mutase (447 aa).

Serine 108 acts as the Phosphoserine intermediate in catalysis. 4 residues coordinate Mg(2+): serine 108, aspartate 247, aspartate 249, and aspartate 251. Serine 108 bears the Phosphoserine mark.

The protein belongs to the phosphohexose mutase family. The cofactor is Mg(2+). Activated by phosphorylation.

It catalyses the reaction alpha-D-glucosamine 1-phosphate = D-glucosamine 6-phosphate. Functionally, catalyzes the conversion of glucosamine-6-phosphate to glucosamine-1-phosphate. The protein is Phosphoglucosamine mutase of Bordetella avium (strain 197N).